The chain runs to 336 residues: Cytosolic Fe-S cluster assembly factor NBP35 (336 aa).

Residues 1 to 20 (MIATQRPFPIPSPVPLAPSS) are disordered. Residues C35, C49, C52, and C58 each coordinate [4Fe-4S] cluster. 88–95 (GKGGVGKS) is an ATP binding site. Positions 261 and 264 each coordinate [4Fe-4S] cluster.

This sequence belongs to the Mrp/NBP35 ATP-binding proteins family. NUBP1/NBP35 subfamily. Heterotetramer of 2 NBP35 and 2 CFD1 chains. Requires [4Fe-4S] cluster as cofactor.

The protein resides in the cytoplasm. In terms of biological role, component of the cytosolic iron-sulfur (Fe/S) protein assembly (CIA) machinery. Required for maturation of extramitochondrial Fe-S proteins. The NBP35-CFD1 heterotetramer forms a Fe-S scaffold complex, mediating the de novo assembly of an Fe-S cluster and its transfer to target apoproteins. The protein is Cytosolic Fe-S cluster assembly factor NBP35 of Cryptococcus neoformans var. neoformans serotype D (strain B-3501A) (Filobasidiella neoformans).